The chain runs to 504 residues: D-alanine--D-alanyl carrier protein ligase (504 aa).

Position 152–153 (152–153 (TS)) interacts with ATP. Aspartate 197 lines the D-alanine pocket. Position 292-297 (292-297 (NTYGPT)) interacts with ATP. Valine 301 provides a ligand contact to D-alanine. ATP-binding positions include aspartate 383, 394–397 (YNGR), and lysine 492. Lysine 492 provides a ligand contact to D-alanine.

It belongs to the ATP-dependent AMP-binding enzyme family. DltA subfamily.

Its subcellular location is the cytoplasm. It catalyses the reaction holo-[D-alanyl-carrier protein] + D-alanine + ATP = D-alanyl-[D-alanyl-carrier protein] + AMP + diphosphate. It participates in cell wall biogenesis; lipoteichoic acid biosynthesis. Catalyzes the first step in the D-alanylation of lipoteichoic acid (LTA), the activation of D-alanine and its transfer onto the D-alanyl carrier protein (Dcp) DltC. In an ATP-dependent two-step reaction, forms a high energy D-alanyl-AMP intermediate, followed by transfer of the D-alanyl residue as a thiol ester to the phosphopantheinyl prosthetic group of the Dcp. D-alanylation of LTA plays an important role in modulating the properties of the cell wall in Gram-positive bacteria, influencing the net charge of the cell wall. The protein is D-alanine--D-alanyl carrier protein ligase of Bacillus cereus (strain ATCC 10987 / NRS 248).